A 358-amino-acid polypeptide reads, in one-letter code: tRNA (guanine-N(7)-)-methyltransferase (358 aa).

Residues 1–29 (MTPPPPKRQKRDEYRKATAEATSQSGASD) are disordered. Residues G99 and 122–123 (EI) each bind S-adenosyl-L-methionine. Low complexity predominate over residues 151 to 186 (TATAASETPSQQQAQIDGKQANANAAADAASPAPST). The segment at 151–194 (TATAASETPSQQQAQIDGKQANANAAADAASPAPSTDTEHMPTT) is disordered. S-adenosyl-L-methionine-binding positions include 209–210 (NT) and C229. D232 is an active-site residue. An S-adenosyl-L-methionine-binding site is contributed by 330 to 332 (TEE).

The protein belongs to the class I-like SAM-binding methyltransferase superfamily. TrmB family. As to quaternary structure, forms a complex with trm82.

It localises to the nucleus. It catalyses the reaction guanosine(46) in tRNA + S-adenosyl-L-methionine = N(7)-methylguanosine(46) in tRNA + S-adenosyl-L-homocysteine. It functions in the pathway tRNA modification; N(7)-methylguanine-tRNA biosynthesis. Its function is as follows. Catalyzes the formation of N(7)-methylguanine at position 46 (m7G46) in tRNA. In Aspergillus fumigatus (strain CBS 144.89 / FGSC A1163 / CEA10) (Neosartorya fumigata), this protein is tRNA (guanine-N(7)-)-methyltransferase (trm8).